A 413-amino-acid polypeptide reads, in one-letter code: Ribulose bisphosphate carboxylase large chain (413 aa).

Asn-100 and Thr-150 together coordinate substrate. Lys-152 functions as the Proton acceptor in the catalytic mechanism. Lys-154 provides a ligand contact to substrate. Positions 178, 180, and 181 each coordinate Mg(2+). Lys-178 carries the post-translational modification N6-carboxylysine. His-271 (proton acceptor) is an active-site residue. Positions 272, 304, and 356 each coordinate substrate.

It belongs to the RuBisCO large chain family. Type I subfamily. In terms of assembly, heterohexadecamer of 8 large chains and 8 small chains; disulfide-linked. The disulfide link is formed within the large subunit homodimers. Mg(2+) is required as a cofactor. In terms of processing, the disulfide bond which can form in the large chain dimeric partners within the hexadecamer appears to be associated with oxidative stress and protein turnover.

Its subcellular location is the plastid. The protein resides in the chloroplast. The catalysed reaction is 2 (2R)-3-phosphoglycerate + 2 H(+) = D-ribulose 1,5-bisphosphate + CO2 + H2O. The enzyme catalyses D-ribulose 1,5-bisphosphate + O2 = 2-phosphoglycolate + (2R)-3-phosphoglycerate + 2 H(+). In terms of biological role, ruBisCO catalyzes two reactions: the carboxylation of D-ribulose 1,5-bisphosphate, the primary event in carbon dioxide fixation, as well as the oxidative fragmentation of the pentose substrate in the photorespiration process. Both reactions occur simultaneously and in competition at the same active site. The chain is Ribulose bisphosphate carboxylase large chain (rbcL) from Adiantum pedatum (Northern maidenhair fern).